We begin with the raw amino-acid sequence, 204 residues long: Large ribosomal subunit protein eL15 (204 aa).

This sequence belongs to the eukaryotic ribosomal protein eL15 family. Component of the large ribosomal subunit.

Its subcellular location is the cytoplasm. Component of the large ribosomal subunit. The ribosome is a large ribonucleoprotein complex responsible for the synthesis of proteins in the cell. This is Large ribosomal subunit protein eL15 (rpl15) from Carassius auratus (Goldfish).